The sequence spans 764 residues: 5-methyltetrahydropteroyltriglutamate--homocysteine methyltransferase (764 aa).

5-methyltetrahydropteroyltri-L-glutamate-binding positions include 17-20 (RELK) and Lys-117. L-homocysteine contacts are provided by residues 437–439 (IGS) and Glu-490. L-methionine contacts are provided by residues 437–439 (IGS) and Glu-490. 5-methyltetrahydropteroyltri-L-glutamate-binding positions include 521 to 522 (RC) and Trp-567. Asp-605 contributes to the L-homocysteine binding site. Position 605 (Asp-605) interacts with L-methionine. A 5-methyltetrahydropteroyltri-L-glutamate-binding site is contributed by Glu-611. Zn(2+) is bound by residues His-647, Cys-649, and Glu-671. Residue His-701 is the Proton donor of the active site. Position 733 (Cys-733) interacts with Zn(2+).

The protein belongs to the vitamin-B12 independent methionine synthase family. Zn(2+) is required as a cofactor.

The catalysed reaction is 5-methyltetrahydropteroyltri-L-glutamate + L-homocysteine = tetrahydropteroyltri-L-glutamate + L-methionine. The protein operates within amino-acid biosynthesis; L-methionine biosynthesis via de novo pathway; L-methionine from L-homocysteine (MetE route): step 1/1. Its function is as follows. Catalyzes the transfer of a methyl group from 5-methyltetrahydrofolate to homocysteine resulting in methionine formation. The protein is 5-methyltetrahydropteroyltriglutamate--homocysteine methyltransferase of Blochmanniella pennsylvanica (strain BPEN).